The primary structure comprises 126 residues: Aspartate 1-decarboxylase (126 aa).

Serine 25 (schiff-base intermediate with substrate; via pyruvic acid) is an active-site residue. Serine 25 is modified (pyruvic acid (Ser)). Substrate is bound at residue threonine 57. The active-site Proton donor is tyrosine 58. 73–75 contributes to the substrate binding site; it reads GAA.

Belongs to the PanD family. In terms of assembly, heterooctamer of four alpha and four beta subunits. Requires pyruvate as cofactor. Is synthesized initially as an inactive proenzyme, which is activated by self-cleavage at a specific serine bond to produce a beta-subunit with a hydroxyl group at its C-terminus and an alpha-subunit with a pyruvoyl group at its N-terminus.

The protein resides in the cytoplasm. The catalysed reaction is L-aspartate + H(+) = beta-alanine + CO2. It participates in cofactor biosynthesis; (R)-pantothenate biosynthesis; beta-alanine from L-aspartate: step 1/1. Functionally, catalyzes the pyruvoyl-dependent decarboxylation of aspartate to produce beta-alanine. This chain is Aspartate 1-decarboxylase, found in Edwardsiella ictaluri (strain 93-146).